A 220-amino-acid polypeptide reads, in one-letter code: Urease accessory protein UreF (220 aa).

This sequence belongs to the UreF family. As to quaternary structure, ureD, UreF and UreG form a complex that acts as a GTP-hydrolysis-dependent molecular chaperone, activating the urease apoprotein by helping to assemble the nickel containing metallocenter of UreC. The UreE protein probably delivers the nickel.

Its subcellular location is the cytoplasm. In terms of biological role, required for maturation of urease via the functional incorporation of the urease nickel metallocenter. The protein is Urease accessory protein UreF of Bordetella bronchiseptica (strain ATCC BAA-588 / NCTC 13252 / RB50) (Alcaligenes bronchisepticus).